The sequence spans 79 residues: Putative defensin-like protein 309 (79 aa).

The first 19 residues, 1 to 19, serve as a signal peptide directing secretion; it reads MKILAFFIFVLLIFSCSSS. Cystine bridges form between Cys-31/Cys-50, Cys-37/Cys-55, and Cys-41/Cys-57.

Belongs to the DEFL family.

Its subcellular location is the secreted. This Arabidopsis thaliana (Mouse-ear cress) protein is Putative defensin-like protein 309.